We begin with the raw amino-acid sequence, 743 residues long: Phenylalanine ammonia-lyase 1 (743 aa).

Catalysis depends on Tyr120, which acts as the Proton donor/acceptor. The 5-imidazolinone (Ala-Gly) cross-link spans Ala224–Gly226. Ser225 carries the 2,3-didehydroalanine (Ser) modification. The (E)-cinnamate site is built by Asn287, Gln377, Arg383, Asn413, Lys484, Glu512, and Asn515.

This sequence belongs to the PAL/histidase family. In terms of assembly, homotetramer. In terms of processing, contains an active site 4-methylidene-imidazol-5-one (MIO), which is formed autocatalytically by cyclization and dehydration of residues Ala-Ser-Gly.

Its subcellular location is the cytoplasm. It catalyses the reaction L-phenylalanine = (E)-cinnamate + NH4(+). It functions in the pathway phenylpropanoid metabolism; trans-cinnamate biosynthesis; trans-cinnamate from L-phenylalanine: step 1/1. Functionally, catalyzes the non-oxidative deamination of L-phenylalanine to form trans-cinnamic acid and a free ammonium ion. Facilitates the commitment step in phenylpropanoid pathways that produce secondary metabolites such as lignins, coumarins and flavonoids. This chain is Phenylalanine ammonia-lyase 1, found in Pleurotus ostreatus (Oyster mushroom).